An 878-amino-acid chain; its full sequence is Enoyl-CoA isomerase/hydratase claC (878 aa).

The disordered stretch occupies residues 541–561; the sequence is VGPASTEATSPVVEPSTMESD. Residues 677–681 and Gly-724 contribute to the substrate site; that span reads AGADL.

Belongs to the enoyl-CoA hydratase/isomerase family.

The protein operates within secondary metabolite biosynthesis. In terms of biological role, enoyl-CoA isomerase/hydratase; part of the cla gene cluster that produces clavatol and ortho-quinone methide. The clavatol biosynthesis cluster cla and the terrestric acid cluster tra are both involved in the production of peniphenones and penilactones. The non-reducing PKS claF is responsible for the formation of clavatol from successive condensations of 3 malonyl-CoA units, presumably with a simple acetyl-CoA starter unit, and 2 methylation steps. The esterase claE probably collaborates with claF by catalyzing the hydrolysis of ACP-bound acyl intermediates to free the ACP from stalled intermediates. The clavatol oxidase claD then converts clavatol to hydroxyclavatol. Spontaneous dehydration of hydroxyclavatol leads to the accumulation of the highly active ortho-quinone methide. On the other hand, the PKS-NRPS hybrid traA is involved in the formation of crustosic acid, with the help of traB and traD. The polyketide synthase module (PKS) of traA is responsible for the synthesis of the polyketide backbone via the condensation of an acetyl-CoA starter unit with 3 malonyl-CoA units. The downstream nonribosomal peptide synthetase (NRPS) module then amidates the carboxyl end of the polyketide with L-malic acid. Because traA lacks a designated enoylreductase (ER) domain, the required activity is provided the enoyl reductase traG. Crustosic acid undergoes decarboxylation and isomerization to the terrestric acid, catalyzed by the 2-oxoglutarate-dependent dioxygenase traH. Both acids are further converted to the 2 gamma-butyrolactones (R)-5-methyltetronic acid and (S)-5-carboxylmethyltetronic acid, with involvement of the cytochrome P450 monooxygenase claJ. Spontaneous addition of the methide to these gamma-butyrolactones leads to peniphenone D and penilactone D, which undergo again stereospecific attacking by methide to give penilactones A and B. The function of the enoyl-CoA isomerase/hydratase claC has not been investigated yet. The polypeptide is Enoyl-CoA isomerase/hydratase claC (Penicillium crustosum (Blue mold fungus)).